The chain runs to 199 residues: MARCKS-related protein (199 aa).

Residues 1 to 199 (MGSQSSKAPR…GPASASAENE (199 aa)) are disordered. The N-myristoyl glycine moiety is linked to residue Gly-2. Phosphothreonine is present on Thr-14. Positions 16-26 (EEAAGASPAKA) are enriched in low complexity. Phosphoserine is present on residues Ser-22, Ser-36, and Ser-48. Residues 53–64 (GADEAAGATGDA) show a composition bias toward low complexity. Position 71 is a phosphoserine (Ser-71). Basic and acidic residues predominate over residues 74 to 85 (AEAKGEVAPKET). Position 85 is a phosphothreonine (Thr-85). The span at 86–98 (PKKKKKFSFKKPF) shows a compositional bias: basic residues. The segment at 87-110 (KKKKKFSFKKPFKLSGLSFKRNRK) is effector domain involved in lipid-binding and calmodulin-binding. 3 positions are modified to phosphoserine; by PKC: Ser-93, Ser-101, and Ser-104. At Ser-119 the chain carries Phosphoserine. Ser-120 bears the Phosphoserine; by MAPK8 mark. Phosphoserine occurs at positions 132 and 135. The residue at position 148 (Thr-148) is a Phosphothreonine; by MAPK8. A phosphoserine mark is found at Ser-151, Ser-162, and Ser-165. Residues 175–199 (GPQAAEPSTPSGPESGPASASAENE) show a composition bias toward low complexity. Thr-183 is subject to Phosphothreonine; by MAPK8.

Belongs to the MARCKS family. Binds to filamentous actin (F-actin), but not to monomeric G-actin, independently of its phosphorylation status. Interacts with calmodulin. Phosphorylated. Phosphorylation at Ser-120 and Thr-183 is non-redundantly catalyzed by MAPK8 in vivo. Phosphorylation at Thr-148 is preferentially catalyzed by MAPK8 in vivo, but this modification can also be catalyzed by other kinases in the absence of MAPK8. May be phosphorylated by protein kinase C, which disrupts the interaction with calmodulin.

Its subcellular location is the cytoplasm. It is found in the cytoskeleton. It localises to the cell membrane. In terms of biological role, controls cell movement by regulating actin cytoskeleton homeostasis and filopodium and lamellipodium formation. When unphosphorylated, induces cell migration. When phosphorylated by MAPK8, induces actin bundles formation and stabilization, thereby reducing actin plasticity, hence restricting cell movement, including neuronal migration. May be involved in coupling the protein kinase C and calmodulin signal transduction systems. This Rattus norvegicus (Rat) protein is MARCKS-related protein (Marcksl1).